A 227-amino-acid polypeptide reads, in one-letter code: TMF-regulated nuclear protein 1 (227 aa).

2 disordered regions span residues 1-72 (MPGC…ELQR) and 200-227 (GRLRRGHGPEPDSPFRRSPPRGPASPQR). Residues 22 to 55 (SPPPPWDPMPSSQPPPPTPTLTPTPTPGQSPPLP) are compositionally biased toward pro residues.

Interacts with TMF1; may regulate TRNP1 proteasomal degradation. Post-translationally, ubiquitinated, leading to its degradation by the proteasome.

It is found in the nucleus. Functionally, DNA-binding factor that regulates the expression of a subset of genes and plays a key role in tangential, radial, and lateral expansion of the brain neocortex. Regulates neural stem cells proliferation and the production of intermediate neural progenitors and basal radial glial cells affecting the process of cerebral cortex gyrification. May control the proliferation rate of cells by regulating their progression through key cell-cycle transition points. In Homo sapiens (Human), this protein is TMF-regulated nuclear protein 1 (TRNP1).